We begin with the raw amino-acid sequence, 484 residues long: tRNA sulfurtransferase (484 aa).

The THUMP domain maps to 63 to 167 (QAFGERLACI…RDKLYMVTKR (105 aa)). ATP is bound by residues 185-186 (LI), Lys267, Gly289, and Gln298. A disulfide bridge links Cys346 with Cys458. The 79-residue stretch at 406 to 484 (IETNEVVIDI…GYTNVKVYRP (79 aa)) folds into the Rhodanese domain. Residue Cys458 is the Cysteine persulfide intermediate of the active site.

It belongs to the ThiI family.

The protein resides in the cytoplasm. The enzyme catalyses [ThiI sulfur-carrier protein]-S-sulfanyl-L-cysteine + a uridine in tRNA + 2 reduced [2Fe-2S]-[ferredoxin] + ATP + H(+) = [ThiI sulfur-carrier protein]-L-cysteine + a 4-thiouridine in tRNA + 2 oxidized [2Fe-2S]-[ferredoxin] + AMP + diphosphate. It carries out the reaction [ThiS sulfur-carrier protein]-C-terminal Gly-Gly-AMP + S-sulfanyl-L-cysteinyl-[cysteine desulfurase] + AH2 = [ThiS sulfur-carrier protein]-C-terminal-Gly-aminoethanethioate + L-cysteinyl-[cysteine desulfurase] + A + AMP + 2 H(+). It participates in cofactor biosynthesis; thiamine diphosphate biosynthesis. In terms of biological role, catalyzes the ATP-dependent transfer of a sulfur to tRNA to produce 4-thiouridine in position 8 of tRNAs, which functions as a near-UV photosensor. Also catalyzes the transfer of sulfur to the sulfur carrier protein ThiS, forming ThiS-thiocarboxylate. This is a step in the synthesis of thiazole, in the thiamine biosynthesis pathway. The sulfur is donated as persulfide by IscS. This chain is tRNA sulfurtransferase, found in Shewanella putrefaciens (strain CN-32 / ATCC BAA-453).